The following is a 212-amino-acid chain: ATP-dependent dethiobiotin synthetase BioD (212 aa).

13–18 (GVGKTV) lines the ATP pocket. A Mg(2+)-binding site is contributed by Thr-17. Residue Lys-33 is part of the active site. Glu-100 provides a ligand contact to Mg(2+). ATP contacts are provided by residues 100–103 (EGAG) and 184–186 (PHL).

Belongs to the dethiobiotin synthetase family. In terms of assembly, homodimer. The cofactor is Mg(2+).

It localises to the cytoplasm. It carries out the reaction (7R,8S)-7,8-diammoniononanoate + CO2 + ATP = (4R,5S)-dethiobiotin + ADP + phosphate + 3 H(+). It functions in the pathway cofactor biosynthesis; biotin biosynthesis; biotin from 7,8-diaminononanoate: step 1/2. Catalyzes a mechanistically unusual reaction, the ATP-dependent insertion of CO2 between the N7 and N8 nitrogen atoms of 7,8-diaminopelargonic acid (DAPA, also called 7,8-diammoniononanoate) to form a ureido ring. This chain is ATP-dependent dethiobiotin synthetase BioD, found in Rhodopseudomonas palustris (strain BisB5).